We begin with the raw amino-acid sequence, 343 residues long: MKTVSIIGGTGYTGSELLRLLSNHDNVEVLNVTSRKEAGKKLTDFHPQVRNLRNYNDLEFQNIAPEDIDTDIVFCATPHGASMAIVPILHEKGINVIDLSGDYRFEDIEMYESWYGLKHTGIIESAVYGLPELHREKIKKSKTIANPGCYPTGAILSMAPLVANDLVDERIIFDSKSGVSGAGVVASQTTHFPNVNENLGAYKITNHRHSPEIGKELDYLGNKKLKVSFTPHLLPVTRGILTTAHSYLKEDVSRADVIEIYEEFYKDEFFVRIFEEGMVSLTGVRGTNFCDIGGFEIDQHGRIVVISAIDNLVKGASGQAIQNMNIIMGFDEKEGLSVGGMRP.

Cys149 is a catalytic residue.

The protein belongs to the NAGSA dehydrogenase family. Type 1 subfamily.

The protein resides in the cytoplasm. It catalyses the reaction N-acetyl-L-glutamate 5-semialdehyde + phosphate + NADP(+) = N-acetyl-L-glutamyl 5-phosphate + NADPH + H(+). Its pathway is amino-acid biosynthesis; L-arginine biosynthesis; N(2)-acetyl-L-ornithine from L-glutamate: step 3/4. In terms of biological role, catalyzes the NADPH-dependent reduction of N-acetyl-5-glutamyl phosphate to yield N-acetyl-L-glutamate 5-semialdehyde. This Methanococcus maripaludis (strain C6 / ATCC BAA-1332) protein is N-acetyl-gamma-glutamyl-phosphate reductase.